The following is a 396-amino-acid chain: Large ribosomal subunit protein uL24m (396 aa).

Residues 374–396 form a disordered region; it reads QLSLGGGQEDAATTTSPEQPKVV. The span at 384–396 shows a compositional bias: polar residues; the sequence is AATTTSPEQPKVV.

This sequence belongs to the universal ribosomal protein uL24 family. In terms of assembly, component of the mitochondrial large ribosomal subunit (mt-LSU). Mature N.crassa 74S mitochondrial ribosomes consist of a small (37S) and a large (54S) subunit. The 37S small subunit contains a 16S ribosomal RNA (16S mt-rRNA) and 32 different proteins. The 54S large subunit contains a 23S rRNA (23S mt-rRNA) and 42 different proteins. uL24m forms the wall of the exit tunnel.

The protein resides in the mitochondrion. In terms of biological role, component of the mitochondrial ribosome (mitoribosome), a dedicated translation machinery responsible for the synthesis of mitochondrial genome-encoded proteins, including at least some of the essential transmembrane subunits of the mitochondrial respiratory chain. The mitoribosomes are attached to the mitochondrial inner membrane and translation products are cotranslationally integrated into the membrane. The chain is Large ribosomal subunit protein uL24m (mrpl40) from Neurospora crassa (strain ATCC 24698 / 74-OR23-1A / CBS 708.71 / DSM 1257 / FGSC 987).